The primary structure comprises 325 residues: Lipoyl synthase (325 aa).

[4Fe-4S] cluster contacts are provided by C72, C77, C83, C98, C102, C105, and S312. The Radical SAM core domain occupies 84 to 301; it reads FAGGTATFMI…AEEGERMGFK (218 aa).

The protein belongs to the radical SAM superfamily. Lipoyl synthase family. The cofactor is [4Fe-4S] cluster.

The protein resides in the cytoplasm. It carries out the reaction [[Fe-S] cluster scaffold protein carrying a second [4Fe-4S](2+) cluster] + N(6)-octanoyl-L-lysyl-[protein] + 2 oxidized [2Fe-2S]-[ferredoxin] + 2 S-adenosyl-L-methionine + 4 H(+) = [[Fe-S] cluster scaffold protein] + N(6)-[(R)-dihydrolipoyl]-L-lysyl-[protein] + 4 Fe(3+) + 2 hydrogen sulfide + 2 5'-deoxyadenosine + 2 L-methionine + 2 reduced [2Fe-2S]-[ferredoxin]. The protein operates within protein modification; protein lipoylation via endogenous pathway; protein N(6)-(lipoyl)lysine from octanoyl-[acyl-carrier-protein]: step 2/2. In terms of biological role, catalyzes the radical-mediated insertion of two sulfur atoms into the C-6 and C-8 positions of the octanoyl moiety bound to the lipoyl domains of lipoate-dependent enzymes, thereby converting the octanoylated domains into lipoylated derivatives. This Azotobacter vinelandii (strain DJ / ATCC BAA-1303) protein is Lipoyl synthase.